The following is an 867-amino-acid chain: Armadillo repeat-containing protein 2 (867 aa).

2 disordered regions span residues 1-115 and 214-252; these read MLSP…CFSF and TSLP…AVPK. Polar residues-rich tracts occupy residues 18 to 28, 40 to 50, and 60 to 69; these read PSVSKQKTSAE, VRTQRPFTPQE, and SSRTSENRPP. Composition is skewed to low complexity over residues 70–81 and 234–243; these read SSFSLHASSFES and SSCPSSSDLS. 12 ARM repeats span residues 262–301, 304–344, 363–403, 408–449, 462–503, 506–547, 551–589, 591–616, 619–662, 664–705, 707–746, and 748–790; these read IEVD…HALE, NMLG…ALKV, EKND…SIKF, LGFL…HLLV, SLVR…KLTS, DCCT…NLTA, QARE…QRGE, HRAQ…NIAI, GVGP…NLSY, QVKN…NLSQ, HDVC…NLTV, and KDKR…NFSE.

In terms of tissue distribution, expressed at higher level in testis.

Its function is as follows. Required for sperm flagellum axoneme organization and function. Involved in axonemal central pair complex assembly and/or stability. The protein is Armadillo repeat-containing protein 2 of Homo sapiens (Human).